The primary structure comprises 699 residues: Polyribonucleotide nucleotidyltransferase (699 aa).

Mg(2+)-binding residues include aspartate 485 and aspartate 491. A KH domain is found at proline 552 to isoleucine 611. The region spanning glycine 621–lysine 689 is the S1 motif domain.

The protein belongs to the polyribonucleotide nucleotidyltransferase family. As to quaternary structure, component of the RNA degradosome, which is a multiprotein complex involved in RNA processing and mRNA degradation. Requires Mg(2+) as cofactor.

Its subcellular location is the cytoplasm. The catalysed reaction is RNA(n+1) + phosphate = RNA(n) + a ribonucleoside 5'-diphosphate. In terms of biological role, involved in mRNA degradation. Catalyzes the phosphorolysis of single-stranded polyribonucleotides processively in the 3'- to 5'-direction. This chain is Polyribonucleotide nucleotidyltransferase, found in Shewanella baltica (strain OS223).